A 462-amino-acid chain; its full sequence is 2-amino-5-chloromuconic acid deaminase (462 aa).

Catalysis depends on charge relay system residues Lys-79 and Ser-156. Residue Ser-180 is the Acyl-ester intermediate of the active site.

This sequence belongs to the amidase family.

It catalyses the reaction (2Z,4E)-2-aminomuconate + H2O = (3E)-2-oxohex-3-enedioate + NH4(+). Its pathway is xenobiotic degradation; nitrobenzene degradation. It participates in xenobiotic degradation; 4-chloronitrobenzene degradation. In terms of biological role, involved in the biodegradation of nitroaromatic and chlorinated nitroaromatic compounds. Catalyzes the conversion of 2-amino-5-chloromuconic acid into 2-hydroxy-5-chloromuconic acid and ammonia. Also able to catalyze the transformation of 2-aminomuconic acid into 2-hydroxymuconic acid. The sequence is that of 2-amino-5-chloromuconic acid deaminase from Comamonas testosteroni (Pseudomonas testosteroni).